A 507-amino-acid chain; its full sequence is Cyclic GMP-AMP synthase (507 aa).

Residues 1–146 are DNA-binding; it reads MEDPRRRTTA…PRAPRGSRKE (146 aa). The tract at residues 1-151 is disordered; it reads MEDPRRRTTA…GSRKEPDKLK (151 aa). Basic residues predominate over residues 7–18; it reads RTTAPRAKKPSA. Residues 44-57 show a composition bias toward basic and acidic residues; it reads RRAERDGDTTEKPR. Residues 48–59 are required for association with the cell membrane; the sequence is RDGDTTEKPRAP. Position 52 is a phosphothreonine (T52). A required for activation upon DNA viral infection region spans residues 119-132; sequence RKVVRGPSHRRGAR. Positions 121–131 are enriched in basic residues; sequence VVRGPSHRRGA. The short motif at 154–159 is the Nuclear export signal element; it reads LDKLRL. Residue K156 is modified to N6-lactoyllysine. A DNA-binding region spans residues 158 to 201; sequence RLKRKDISEAAETVNKVVERLLRRMQKRESEFKGVEQLNTGSYY. E176 carries the polyADP-ribosyl glutamic acid modification. T197 is a binding site for GTP. Position 199 (S199) interacts with ATP. S199 is modified (phosphoserine). At Y201 the chain carries Phosphotyrosine. The Mg(2+) site is built by E211 and D213. Position 213 (D213) interacts with 2',3'-cGAMP. A Glycyl lysine isopeptide (Lys-Gly) (interchain with G-Cter in SUMO) cross-link involves residue K217. K271 is covalently cross-linked (Glycyl lysine isopeptide (Lys-Gly) (interchain with G-Cter in ubiquitin)). E272 carries the post-translational modification 5-glutamyl polyglutamate. The short motif at 281-291 is the Nuclear localization signal element; sequence DVSVEKEKPGS. G290 contributes to the 2',3'-cGAMP binding site. The residue at position 291 (S291) is a Phosphoserine; by CDK1 and PKB. E302 carries the 5-glutamyl glutamate modification. Residue D307 coordinates GTP. Residue D307 participates in Mg(2+) binding. D307 is a binding site for 2',3'-cGAMP. The segment at 329-370 is interaction with collided ribosomes; that stretch reads QGWLGTKVRTNLRREPFYLVPKNAKDGNSFQGETWRLSFSHT. K335 participates in a covalent cross-link: Glycyl lysine isopeptide (Lys-Gly) (interchain with G-Cter in SUMO); alternate. K335 is covalently cross-linked (Glycyl lysine isopeptide (Lys-Gly) (interchain with G-Cter in ubiquitin); alternate). Residues K350 and 364–366 contribute to the 2',3'-cGAMP site; that span reads RLS. Residue 364–371 coordinates GTP; the sequence is RLSFSHTE. E371 is a binding site for ATP. A Glycyl lysine isopeptide (Lys-Gly) (interchain with G-Cter in SUMO); alternate cross-link involves residue K372. K372 participates in a covalent cross-link: Glycyl lysine isopeptide (Lys-Gly) (interchain with G-Cter in ubiquitin); alternate. Position 372 is an N6-acetyllysine (K372). A DNA-binding region spans residues 372–395; sequence KYILNNHGIEKTCCESSGAKCCRK. Residue H378 coordinates Zn(2+). K382 is covalently cross-linked (Glycyl lysine isopeptide (Lys-Gly) (interchain with G-Cter in SUMO)). K382 bears the N6-acetyllysine mark. Residues C384, C385, and C392 each contribute to the Zn(2+) site. S-palmitoyl cysteine attachment occurs at residues C392 and C393. Residues K399, K402, K409, and K410 each participate in a glycyl lysine isopeptide (Lys-Gly) (interchain with G-Cter in ubiquitin) cross-link. K402 contacts ATP. K402 carries the post-translational modification N6-acetyllysine. S420 bears the Phosphoserine mark. Residue 420–424 participates in ATP binding; it reads SYHVK. C459 carries S-palmitoyl cysteine lipidation. Residue K464 forms a Glycyl lysine isopeptide (Lys-Gly) (interchain with G-Cter in SUMO); alternate linkage. A Glycyl lysine isopeptide (Lys-Gly) (interchain with G-Cter in ubiquitin); alternate cross-link involves residue K464. K491 is modified (N6-methyllysine).

This sequence belongs to the mab-21 family. In terms of assembly, monomer in the absence of DNA. Homodimer in presence of dsDNA: forms a 2:2 dimer with two enzymes binding to two DNA molecules. Interacts with nucleosomes; interaction is mainly mediated via histones H2A and H2B and inactivates the nucleotidyltransferase activity by blocking DNA-binding and subsequent activation. Interacts with PQBP1 (via WW domain). Interacts with TRIM14; this interaction recruits USP14, leading to deubiquitinate and stabilize CGAS and promote type I interferon production. Interacts with ZCCHC3; promoting sensing of dsDNA by CGAS. Interacts (when not monomethylated) with (poly-ADP-ribosylated) PARP1; interaction takes place in the nucleus and prevents the formation of the PARP1-TIMELESS complex. Interacts (when monomethylated) with SGF29; interaction with SGF29 prevents interaction with PARP1. Interacts with PCBP2; preventing the formation of liquid-like droplets in which CGAS is activated. Interacts with Irgm1; promoting CGAS degradation. Interacts with DDX41. Requires Mg(2+) as cofactor. Mn(2+) is required as a cofactor. Zn(2+) serves as cofactor. Post-translationally, the N-terminal disordered part (1-146) is phosphorylated by AURKB during the G2-M transition, blocking CGAS liquid phase separation and preventing activation. Phosphorylation at Tyr-201 by BLK promotes cytosolic retention. Localizes into the nucleus following dephosphorylation at Tyr-201. Phosphorylation at Ser-420 activates the nucleotidyltransferase activity. Dephosphorylation at Ser-420 by PPP6C impairs its ability to bind GTP, thereby inactivating it. Phosphorylation at Thr-52 and Ser-199 by PRKDC inhibits its cyclic GMP-AMP synthase activity by impairing homodimerization and activation. Phosphorylation at Ser-291 by AKT (AKT1, AKT2 or AKT3) suppresses the nucleotidyltransferase activity. Phosphorylation at Ser-291 by CDK1 during mitosis leads to its inhibition, thereby preventing CGAS activation by self-DNA during mitosis. Dephosphorylated at Ser-291 by protein phosphatase PP1 upon mitotic exit. In terms of processing, ubiquitinated at Lys-402 via 'Lys-48'-linked polyubiquitin chains, leading to its SQSTM1-mediated autophagic degradation. Interaction with TRIM14 promotes recruitment of USP14, leading to deubiquitinate Lys-402 and stabilize CGAS. Ubiquitinated at Lys-372 by RNF185 via 'Lys-27'-linked polyubiquitination, promoting CGAS cyclic GMP-AMP synthase activity. Monoubiquitination at Lys-335 by TRIM56 promotes oligomerization and subsequent activation. Monoubiquitination by TRIM41 promotes CGAS activation. Ubiquitination at Lys-271 and Lys-464 via 'Lys-48'-linked polyubiquitination promotes its degradation. Deubiquitination at Lys-271 by USP29 promotes its stabilization. Deubiquitinated by USP27X, promoting its stabilization. Ubiquitinated at Lys-399 via 'Lys-63'-linked polyubiquitin chains by MARCHF8, leading to the inhibition of its DNA binding ability. In cycling cells, nucleosome-bound CGAS is ubiquitinated at Lys-409 and Lys-410 via 'Lys-48'-linked polyubiquitin chains by the ECS(SPSB3) complex, leading to its degradation: ubiquitination and degradation of nuclear CGAS during G1 and G2 phases is required to promote low intranuclear CGAS abundance before the next mitotic cycle. Sumoylated at Lys-217 and Lys-464 by TRIM38 in uninfected cells and during the early phase of viral infection, promoting its stability by preventing ubiquitination at Lys-271 and Lys-464, and subsequent degradation. Desumoylated by SENP2 during the late phase of viral infection. Sumoylation at Lys-335, Lys-372 and Lys-382 prevents DNA-binding, oligomerization and nucleotidyltransferase activity. Desumoylation at Lys-335, Lys-372 and Lys-382 by SENP7 relieves inhibition and activates CGAS. Post-translationally, polyglutamylated by TTLL6 at Glu-272, leading to impair DNA-binding activity. Monoglutamylated at Glu-302 by TTLL4, leading to impair the nucleotidyltransferase activity. Deglutamylated by AGBL5/CCP5 and AGBL6/CCP6. In terms of processing, acetylation at Lys-372, Lys-382 and Lys-402 inhibits the cyclic GMP-AMP synthase activity. Deacetylated upon cytosolic DNA challenge such as viral infections. Acetylation by KAT5 increases the cyclic GMP-AMP synthase activity by promoting DNA-binding and subsequent activation. Proteolytically cleaved by apoptotic caspases during apoptosis, leading to its inactivation. The damage of the nucleus and the mitochondria during apoptosis leads to leakage of nuclear and mitochondrial DNA, which activate CGAS: cleavage and inactivation during apoptosis in required to prevent cytokine overproduction. Cleaved by CASP7 and CASP3 during virus-induced apoptosis, thereby inactivating it and preventing cytokine overproduction. Cleaved by CASP1 upon DNA virus infection; the cleavage impairs cGAMP production. Also cleaved by the pyroptotic CASP4 during non-canonical inflammasome activation; does not cut at the same sites than CASP1. Post-translationally, degraded via selective autophagy following interaction with Irgm1. Irgm1 promotes CGAS recruitment to autophagosome membranes, promoting its SQSTM1/p62-dependent autophagic degradation. In terms of processing, poly-ADP-ribosylation at Glu-176 by PARP1 impairs DNA-binding, thereby preventing the cyclic GMP-AMP synthase activity. Palmitoylation at Cys-459 by ZDHHC18 impairs DNA-binding, thereby preventing the cyclic GMP-AMP synthase activity. Palmitoylation at Cys-392 and Cys-393 by ZDHHC9 promotes homodimerization and cyclic GMP-AMP synthase activity. Depalmitoylation at Cys-392 and Cys-393 by LYPLAL1 impairs homodimerization and cyclic GMP-AMP synthase activity. Post-translationally, monomethylated at Lys-491 by SETD7. Monomethylation promotes interaction with SGF29, preventing interaction between PARP1 nad SGF29. Demethylation by RIOX1 promotes interaction with PARP1, followed by PARP1 inactivation. In terms of processing, lactylation by AARS2 prevents ability to undergo liquid-liquid phase separation (LLPS), thereby inhibiting CGAS activation.

It localises to the nucleus. It is found in the chromosome. The protein localises to the cell membrane. The protein resides in the cytoplasm. Its subcellular location is the cytosol. It carries out the reaction GTP + ATP = 2',3'-cGAMP + 2 diphosphate. The catalysed reaction is GTP + ATP = pppGp(2'-5')A + diphosphate. It catalyses the reaction pppGp(2'-5')A = 2',3'-cGAMP + diphosphate. With respect to regulation, the enzyme activity is strongly increased by double-stranded DNA (dsDNA), but not by single-stranded DNA or RNA. DNA-binding induces the formation of liquid-like droplets in which CGAS is activated. Liquid-like droplets also create a selective environment that restricts entry of negative regulators, such as TREX1 or BANF1/BAF, allowing sensing of DNA. A number of mechanisms exist to restrict its activity toward self-DNA. The nucleotidyltransferase activity is inhibited in the nucleus via its association with nucleosomes: interacts with the acidic patch of histones H2A and H2B, thereby blocking DNA-binding and subsequent activation. CGAS is also inactive when associated with mitotic chromatin. Chromatin-bound CGAS cannot be activated by exogenous DNA in mitotic cells: phosphorylation of the N-terminal disordered part by AURKB during the G2-M transition blocks CGAS liquid phase separation and activation. Activity toward self-DNA is inhibited by BANF1/BAF upon acute loss of nuclear membrane integrity: BANF1/BAF acts by outcompeting CGAS for DNA-binding, thereby preventing CGAS activation. DNA-induced activation at micronuclei is also limited by TREX1, which degrades micronuclear DNA upon nuclear envelope rupture, thereby preventing CGAS activation. CGAS can be released from nucleosomes and activated by MRE11 component of the MRN complex, which displaces CGAS from acidic-patch-mediated sequestration. Acetylation at Lys-372, Lys-382 and Lys-402 inhibits the cyclic GMP-AMP synthase activity. Acetylation by KAT5 increases the cyclic GMP-AMP synthase activity by promoting DNA-binding and subsequent activation. Phosphorylation at Ser-291 suppresses the nucleotidyltransferase activity. Phosphorylation at Ser-420 promotes the cyclic GMP-AMP synthase activity. Phosphorylation at Thr-52 and Ser-199 inhibits its cyclic GMP-AMP synthase activity. Ubiquitination at Lys-372 via 'Lys-27'-linked polyubiquitination enhances the cyclic GMP-AMP synthase activity. Monoubiquitination at Lys-335 promotes oligomerization and subsequent activation. Sumoylation at Lys-335, Lys-372 and Lys-382 prevents DNA-binding, oligomerization and nucleotidyltransferase activity. The enzyme activity is impaired by the cleavage by CASP1. In addition to DNA, also activated by collided ribosomes upon translation stress: specifically binds collided ribosomes, promoting its activation and triggering type-I interferon production. In hematopoietic stem cells, binding to circular RNA cia-cGAS inhibits the cyclic GMP-AMP synthase activity. Strongly inhibited by compound RU.521, which is specific for mouse protein. Functionally, nucleotidyltransferase that catalyzes the formation of cyclic GMP-AMP (2',3'-cGAMP) from ATP and GTP and plays a key role in innate immunity. Catalysis involves both the formation of a 2',5' phosphodiester linkage at the GpA step and the formation of a 3',5' phosphodiester linkage at the ApG step, producing c[G(2',5')pA(3',5')p]. Acts as a key DNA sensor: directly binds double-stranded DNA (dsDNA), inducing the formation of liquid-like droplets in which CGAS is activated, leading to synthesis of 2',3'-cGAMP, a second messenger that binds to and activates STING1, thereby triggering type-I interferon production. Preferentially binds long dsDNA (around 45 bp) and forms ladder-like networks that function cooperatively to stabilize individual cGAS-dsDNA complexes. Acts as a key foreign DNA sensor, the presence of double-stranded DNA (dsDNA) in the cytoplasm being a danger signal that triggers the immune responses. Has antiviral activity by sensing the presence of dsDNA from DNA viruses in the cytoplasm. Also acts as an innate immune sensor of infection by retroviruses by detecting the presence of reverse-transcribed DNA in the cytosol. Detection of retroviral reverse-transcribed DNA in the cytosol may be indirect and be mediated via interaction with PQBP1, which directly binds reverse-transcribed retroviral DNA. Also detects the presence of DNA from bacteria. 2',3'-cGAMP can be transferred from producing cells to neighboring cells through gap junctions, leading to promote STING1 activation and convey immune response to connecting cells. 2',3'-cGAMP can also be transferred between cells by virtue of packaging within viral particles contributing to IFN-induction in newly infected cells in a cGAS-independent but STING1-dependent manner. Also senses the presence of neutrophil extracellular traps (NETs) that are translocated to the cytosol following phagocytosis, leading to synthesis of 2',3'-cGAMP. In addition to foreign DNA, can also be activated by endogenous nuclear or mitochondrial DNA. When self-DNA leaks into the cytosol during cellular stress (such as mitochondrial stress, DNA damage, mitotic arrest or senescence), or is present in form of cytosolic micronuclei, CGAS is activated leading to a state of sterile inflammation. Acts as a regulator of cellular senescence by binding to cytosolic chromatin fragments that are present in senescent cells, leading to trigger type-I interferon production via STING1 and promote cellular senescence. Also involved in the inflammatory response to genome instability and double-stranded DNA breaks: acts by localizing to micronuclei arising from genome instability. Micronuclei, which as frequently found in cancer cells, consist of chromatin surrounded by its own nuclear membrane: following breakdown of the micronuclear envelope, a process associated with chromothripsis, CGAS binds self-DNA exposed to the cytosol, leading to 2',3'-cGAMP synthesis and subsequent activation of STING1 and type-I interferon production. In a healthy cell, CGAS is however kept inactive even in cellular events that directly expose it to self-DNA, such as mitosis, when cGAS associates with chromatin directly after nuclear envelope breakdown or remains in the form of postmitotic persistent nuclear cGAS pools bound to chromatin. Nuclear CGAS is inactivated by chromatin via direct interaction with nucleosomes, which block CGAS from DNA binding and thus prevent CGAS-induced autoimmunity. Also acts as a suppressor of DNA repair in response to DNA damage: inhibits homologous recombination repair by interacting with PARP1, the CGAS-PARP1 interaction leading to impede the formation of the PARP1-TIMELESS complex. In addition to DNA, also sense translation stress: in response to translation stress, translocates to the cytosol and associates with collided ribosomes, promoting its activation and triggering type-I interferon production. The polypeptide is Cyclic GMP-AMP synthase (Mus musculus (Mouse)).